The following is a 203-amino-acid chain: tRNA (cytidine(56)-2'-O)-methyltransferase (203 aa).

S-adenosyl-L-methionine contacts are provided by residues leucine 80, 109 to 113, and 127 to 134; these read GAEKV and IGNQPHSE. Residues 178-203 form a disordered region; it reads AEQDKAEGKATPGKNWENSGFTGDNP. A compositionally biased stretch (polar residues) spans 193–203; it reads WENSGFTGDNP.

It belongs to the aTrm56 family. In terms of assembly, homodimer.

The protein localises to the cytoplasm. It carries out the reaction cytidine(56) in tRNA + S-adenosyl-L-methionine = 2'-O-methylcytidine(56) in tRNA + S-adenosyl-L-homocysteine + H(+). Its function is as follows. Specifically catalyzes the AdoMet-dependent 2'-O-ribose methylation of cytidine at position 56 in tRNAs. This is tRNA (cytidine(56)-2'-O)-methyltransferase from Pyrococcus horikoshii (strain ATCC 700860 / DSM 12428 / JCM 9974 / NBRC 100139 / OT-3).